Reading from the N-terminus, the 501-residue chain is Cytochrome P450 2J1 (501 aa).

Cys-447 is a binding site for heme.

It belongs to the cytochrome P450 family. Heme serves as cofactor. As to expression, small intestine.

The protein localises to the endoplasmic reticulum membrane. It is found in the microsome membrane. It carries out the reaction an organic molecule + reduced [NADPH--hemoprotein reductase] + O2 = an alcohol + oxidized [NADPH--hemoprotein reductase] + H2O + H(+). Catalyzes the N-demethylation of benzphetamine to formaldehyde. This is Cytochrome P450 2J1 (CYP2J1) from Oryctolagus cuniculus (Rabbit).